The chain runs to 154 residues: SsrA-binding protein (154 aa).

The segment at 130 to 154 (KLHDKRETERRRQDQRDIQRAIKRA) is disordered. Basic and acidic residues predominate over residues 133 to 154 (DKRETERRRQDQRDIQRAIKRA).

It belongs to the SmpB family.

The protein localises to the cytoplasm. Its function is as follows. Required for rescue of stalled ribosomes mediated by trans-translation. Binds to transfer-messenger RNA (tmRNA), required for stable association of tmRNA with ribosomes. tmRNA and SmpB together mimic tRNA shape, replacing the anticodon stem-loop with SmpB. tmRNA is encoded by the ssrA gene; the 2 termini fold to resemble tRNA(Ala) and it encodes a 'tag peptide', a short internal open reading frame. During trans-translation Ala-aminoacylated tmRNA acts like a tRNA, entering the A-site of stalled ribosomes, displacing the stalled mRNA. The ribosome then switches to translate the ORF on the tmRNA; the nascent peptide is terminated with the 'tag peptide' encoded by the tmRNA and targeted for degradation. The ribosome is freed to recommence translation, which seems to be the essential function of trans-translation. The sequence is that of SsrA-binding protein from Synechococcus elongatus (strain ATCC 33912 / PCC 7942 / FACHB-805) (Anacystis nidulans R2).